Here is a 430-residue protein sequence, read N- to C-terminus: Enolase (430 aa).

Gln-167 contributes to the (2R)-2-phosphoglycerate binding site. Glu-209 acts as the Proton donor in catalysis. Positions 246, 289, and 316 each coordinate Mg(2+). Positions 341, 370, 371, and 392 each coordinate (2R)-2-phosphoglycerate. The Proton acceptor role is filled by Lys-341.

The protein belongs to the enolase family. Component of the RNA degradosome, a multiprotein complex involved in RNA processing and mRNA degradation. Mg(2+) serves as cofactor.

It is found in the cytoplasm. Its subcellular location is the secreted. It localises to the cell surface. It catalyses the reaction (2R)-2-phosphoglycerate = phosphoenolpyruvate + H2O. The protein operates within carbohydrate degradation; glycolysis; pyruvate from D-glyceraldehyde 3-phosphate: step 4/5. In terms of biological role, catalyzes the reversible conversion of 2-phosphoglycerate (2-PG) into phosphoenolpyruvate (PEP). It is essential for the degradation of carbohydrates via glycolysis. The polypeptide is Enolase (Alcanivorax borkumensis (strain ATCC 700651 / DSM 11573 / NCIMB 13689 / SK2)).